Consider the following 60-residue polypeptide: Large ribosomal subunit protein bL32 (60 aa).

The segment covering 1–20 has biased composition (basic residues); that stretch reads MAKPARHTSKAKRNKRRTHY. A disordered region spans residues 1-22; it reads MAKPARHTSKAKRNKRRTHYKL.

It belongs to the bacterial ribosomal protein bL32 family.

The protein is Large ribosomal subunit protein bL32 of Streptococcus agalactiae serotype V (strain ATCC BAA-611 / 2603 V/R).